The following is a 206-amino-acid chain: Small ribosomal subunit protein uS5 (206 aa).

Over residues 1–23 (MTDTPTKQENQSKTENPPSSNAN) the composition is skewed to polar residues. The interval 1–52 (MTDTPTKQENQSKTENPPSSNANEQRRGNRNNDRKRNRRGDSKNERDSEWQE) is disordered. Basic and acidic residues predominate over residues 24 to 52 (EQRRGNRNNDRKRNRRGDSKNERDSEWQE). The S5 DRBM domain maps to 50–113 (WQERVVQIRR…SDGKKHLVRV (64 aa)).

It belongs to the universal ribosomal protein uS5 family. As to quaternary structure, part of the 30S ribosomal subunit. Contacts proteins S4 and S8.

Its function is as follows. With S4 and S12 plays an important role in translational accuracy. Located at the back of the 30S subunit body where it stabilizes the conformation of the head with respect to the body. This Prochlorococcus marinus subsp. pastoris (strain CCMP1986 / NIES-2087 / MED4) protein is Small ribosomal subunit protein uS5.